A 206-amino-acid polypeptide reads, in one-letter code: ATP-dependent Clp protease proteolytic subunit (206 aa).

The Nucleophile role is filled by S110. H135 is an active-site residue.

This sequence belongs to the peptidase S14 family. Fourteen ClpP subunits assemble into 2 heptameric rings which stack back to back to give a disk-like structure with a central cavity, resembling the structure of eukaryotic proteasomes.

It localises to the cytoplasm. It carries out the reaction Hydrolysis of proteins to small peptides in the presence of ATP and magnesium. alpha-casein is the usual test substrate. In the absence of ATP, only oligopeptides shorter than five residues are hydrolyzed (such as succinyl-Leu-Tyr-|-NHMec, and Leu-Tyr-Leu-|-Tyr-Trp, in which cleavage of the -Tyr-|-Leu- and -Tyr-|-Trp bonds also occurs).. Cleaves peptides in various proteins in a process that requires ATP hydrolysis. Has a chymotrypsin-like activity. Plays a major role in the degradation of misfolded proteins. The chain is ATP-dependent Clp protease proteolytic subunit from Edwardsiella ictaluri (strain 93-146).